Here is a 181-residue protein sequence, read N- to C-terminus: Crossover junction endodeoxyribonuclease RuvC (181 aa).

Residues Asp-8, Glu-67, and Asp-139 contribute to the active site. Residues Asp-8, Glu-67, and Asp-139 each contribute to the Mg(2+) site.

This sequence belongs to the RuvC family. Homodimer which binds Holliday junction (HJ) DNA. The HJ becomes 2-fold symmetrical on binding to RuvC with unstacked arms; it has a different conformation from HJ DNA in complex with RuvA. In the full resolvosome a probable DNA-RuvA(4)-RuvB(12)-RuvC(2) complex forms which resolves the HJ. Requires Mg(2+) as cofactor.

Its subcellular location is the cytoplasm. It carries out the reaction Endonucleolytic cleavage at a junction such as a reciprocal single-stranded crossover between two homologous DNA duplexes (Holliday junction).. The RuvA-RuvB-RuvC complex processes Holliday junction (HJ) DNA during genetic recombination and DNA repair. Endonuclease that resolves HJ intermediates. Cleaves cruciform DNA by making single-stranded nicks across the HJ at symmetrical positions within the homologous arms, yielding a 5'-phosphate and a 3'-hydroxyl group; requires a central core of homology in the junction. The consensus cleavage sequence is 5'-(A/T)TT(C/G)-3'. Cleavage occurs on the 3'-side of the TT dinucleotide at the point of strand exchange. HJ branch migration catalyzed by RuvA-RuvB allows RuvC to scan DNA until it finds its consensus sequence, where it cleaves and resolves the cruciform DNA. In Acinetobacter baumannii (strain SDF), this protein is Crossover junction endodeoxyribonuclease RuvC.